Consider the following 86-residue polypeptide: Small ribosomal subunit protein uS17 (86 aa).

This sequence belongs to the universal ribosomal protein uS17 family. In terms of assembly, part of the 30S ribosomal subunit.

In terms of biological role, one of the primary rRNA binding proteins, it binds specifically to the 5'-end of 16S ribosomal RNA. The chain is Small ribosomal subunit protein uS17 from Streptococcus thermophilus (strain CNRZ 1066).